The primary structure comprises 252 residues: T-box transcription factor mls-1 (252 aa).

The T-box DNA-binding region spans 40-210 (LWRRFHNLGT…SNPFAKGFRE (171 aa)).

May interact with unc-37.

The protein localises to the nucleus. Functionally, probable transcription factor required for the cell fate specification of non-striated uterine muscle precursor cells. Furthermore, may function with the transcriptional corepressor unc-37. The chain is T-box transcription factor mls-1 from Caenorhabditis elegans.